We begin with the raw amino-acid sequence, 2767 residues long: Serine/threonine-protein kinase ATM (2767 aa).

Positions 1713–2317 (NVVMASNHCQ…FYQLYPLVFA (605 aa)) constitute an FAT domain. The 316-residue stretch at 2419–2734 (WTNETTQCGG…KLDGREAGTM (316 aa)) folds into the PI3K/PI4K catalytic domain. The G-loop stretch occupies residues 2425–2431 (QCGGLNA). The catalytic loop stretch occupies residues 2601 to 2609 (GLGDRHTQN). Residues 2621–2645 (HIDFGIAFEQGKIQTTPETVPFRLT) form an activation loop region. In terms of domain architecture, FATC spans 2735–2767 (GDSNVEAQVERLINEATLPSNLCMLFPGWDPHL).

It belongs to the PI3/PI4-kinase family. ATM subfamily.

It localises to the nucleus. It is found in the chromosome. Its subcellular location is the telomere. It catalyses the reaction L-seryl-[protein] + ATP = O-phospho-L-seryl-[protein] + ADP + H(+). The catalysed reaction is L-threonyl-[protein] + ATP = O-phospho-L-threonyl-[protein] + ADP + H(+). Serine/threonine-protein kinase which recognizes the substrate consensus sequence [ST]-Q. Required to suppress spontaneous apoptosis of proliferating cells during development, and for their proper differentiation. Required for female fertility. Protects telomeres from fusion, maybe by recruiting or maintaining chromatin-modifying complexes such as Su(var)205/HP1. May activate checkpoint signaling in response to DNA double-stranded breaks induced by low-dose ionizing radiation. May phosphorylate histone H2AV. This Drosophila melanogaster (Fruit fly) protein is Serine/threonine-protein kinase ATM (tefu).